Here is a 61-residue protein sequence, read N- to C-terminus: ILNSPDRACNLAKQAFDEAISELDSLGEESYKDSTLIMQLLXDNLTLWTSDTNEDGGDEIK.

Belongs to the 14-3-3 family.

The sequence is that of 14-3-3-like protein from Zea mays (Maize).